The chain runs to 440 residues: Metacaspase-1 (440 aa).

The interval 1–134 (MFPGSGRKTY…NPQGFGQNSG (134 aa)) is disordered. Positions 14–51 (APPPGPPNGYQYGPPPGAQGQYPPPQGYPPQGYPPQGY) are enriched in pro residues. Positions 52-81 (PPQGYAPQGYPPQGYAPQGYAPQGYQQQGG) are enriched in low complexity. The segment covering 82 to 94 (QQQGGQQQGGQQQ) has biased composition (gly residues). Positions 98-110 (RQTYATQEAQNFG) are enriched in polar residues. Catalysis depends on residues histidine 230 and cysteine 286.

It belongs to the peptidase C14B family.

In terms of biological role, involved in cell death (apoptosis). The polypeptide is Metacaspase-1 (MCA1) (Debaryomyces hansenii (strain ATCC 36239 / CBS 767 / BCRC 21394 / JCM 1990 / NBRC 0083 / IGC 2968) (Yeast)).